Consider the following 440-residue polypeptide: Thymidine phosphorylase (440 aa).

This sequence belongs to the thymidine/pyrimidine-nucleoside phosphorylase family. As to quaternary structure, homodimer.

It catalyses the reaction thymidine + phosphate = 2-deoxy-alpha-D-ribose 1-phosphate + thymine. The protein operates within pyrimidine metabolism; dTMP biosynthesis via salvage pathway; dTMP from thymine: step 1/2. The enzymes which catalyze the reversible phosphorolysis of pyrimidine nucleosides are involved in the degradation of these compounds and in their utilization as carbon and energy sources, or in the rescue of pyrimidine bases for nucleotide synthesis. This chain is Thymidine phosphorylase, found in Klebsiella pneumoniae subsp. pneumoniae (strain ATCC 700721 / MGH 78578).